The sequence spans 58 residues: Protein SHMOOSE (58 aa).

Residues Phe27–Arg58 are disordered. Residues Asn35–Asn45 show a composition bias toward low complexity. Residues Pro46–Arg58 are compositionally biased toward pro residues.

Interacts with IMMT/mitofilin. As to expression, detected in cerebrospinal fluid (at protein level).

It is found in the mitochondrion. The protein localises to the nucleus. In terms of biological role, increases neural cell metabolic activity and mitochondrial oxygen consumption rate. This is Protein SHMOOSE from Homo sapiens (Human).